Reading from the N-terminus, the 883-residue chain is HTH-type transcriptional regulator AlkS (883 aa).

Positions 816–881 (ENKAGDFLTL…QAIIEAERQG (66 aa)) constitute an HTH luxR-type domain. The H-T-H motif DNA-binding region spans 840 to 859 (NKQIATKMYVTEDAIKWHMR).

It participates in hydrocarbon metabolism; alkane degradation. In terms of biological role, may act as a transcriptional regulator of AlkB. In Pseudomonas putida (Arthrobacter siderocapsulatus), this protein is HTH-type transcriptional regulator AlkS (alkS).